The chain runs to 327 residues: GTP 3',8-cyclase (327 aa).

A Radical SAM core domain is found at 7–232; sequence HHDRQFRYLR…IKRDRTAGPA (226 aa). Arg-16 is a GTP binding site. Residues Cys-23 and Cys-27 each contribute to the [4Fe-4S] cluster site. Tyr-29 contacts S-adenosyl-L-methionine. Residue Cys-30 coordinates [4Fe-4S] cluster. Position 66 (Arg-66) interacts with GTP. Residue Gly-70 coordinates S-adenosyl-L-methionine. Thr-97 is a GTP binding site. Ser-121 serves as a coordination point for S-adenosyl-L-methionine. Lys-158 contributes to the GTP binding site. Met-192 provides a ligand contact to S-adenosyl-L-methionine. [4Fe-4S] cluster is bound by residues Cys-255 and Cys-258. Residue 260–262 coordinates GTP; that stretch reads RLR. Cys-272 is a binding site for [4Fe-4S] cluster.

This sequence belongs to the radical SAM superfamily. MoaA family. In terms of assembly, monomer and homodimer. [4Fe-4S] cluster serves as cofactor.

It catalyses the reaction GTP + AH2 + S-adenosyl-L-methionine = (8S)-3',8-cyclo-7,8-dihydroguanosine 5'-triphosphate + 5'-deoxyadenosine + L-methionine + A + H(+). The protein operates within cofactor biosynthesis; molybdopterin biosynthesis. Its function is as follows. Catalyzes the cyclization of GTP to (8S)-3',8-cyclo-7,8-dihydroguanosine 5'-triphosphate. The chain is GTP 3',8-cyclase from Synechococcus elongatus (strain ATCC 33912 / PCC 7942 / FACHB-805) (Anacystis nidulans R2).